Reading from the N-terminus, the 642-residue chain is Threonine--tRNA ligase (642 aa).

The TGS domain occupies 1 to 61; it reads MPVITLPDGS…ENDATLSIIT (61 aa). Residues 243–534 are catalytic; that stretch reads DHRKIGKQLD…LTEEFAGFFP (292 aa). Residues C334, H385, and H511 each contribute to the Zn(2+) site.

It belongs to the class-II aminoacyl-tRNA synthetase family. As to quaternary structure, homodimer. Zn(2+) serves as cofactor.

Its subcellular location is the cytoplasm. It carries out the reaction tRNA(Thr) + L-threonine + ATP = L-threonyl-tRNA(Thr) + AMP + diphosphate + H(+). Functionally, catalyzes the attachment of threonine to tRNA(Thr) in a two-step reaction: L-threonine is first activated by ATP to form Thr-AMP and then transferred to the acceptor end of tRNA(Thr). Also edits incorrectly charged L-seryl-tRNA(Thr). The polypeptide is Threonine--tRNA ligase (Salmonella heidelberg (strain SL476)).